Consider the following 219-residue polypeptide: Probable GTP-binding protein EngB (219 aa).

One can recognise an EngB-type G domain in the interval 24–207; it reads VQPEIAFAGR…HELIESWLRP (184 aa). GTP is bound by residues 32 to 39, 59 to 63, 81 to 84, 148 to 151, and 186 to 188; these read GRSNAGKS, GRTQH, DLPG, TKCD, and FSA. Residues Ser-39 and Thr-61 each coordinate Mg(2+).

Belongs to the TRAFAC class TrmE-Era-EngA-EngB-Septin-like GTPase superfamily. EngB GTPase family. It depends on Mg(2+) as a cofactor.

Its function is as follows. Necessary for normal cell division and for the maintenance of normal septation. This is Probable GTP-binding protein EngB from Burkholderia vietnamiensis (strain G4 / LMG 22486) (Burkholderia cepacia (strain R1808)).